The following is a 183-amino-acid chain: Ribose 1,5-bisphosphate phosphokinase PhnN (183 aa).

6-13 (GPSGAGKD) contacts ATP.

The protein belongs to the ribose 1,5-bisphosphokinase family.

It carries out the reaction alpha-D-ribose 1,5-bisphosphate + ATP = 5-phospho-alpha-D-ribose 1-diphosphate + ADP. It functions in the pathway metabolic intermediate biosynthesis; 5-phospho-alpha-D-ribose 1-diphosphate biosynthesis; 5-phospho-alpha-D-ribose 1-diphosphate from D-ribose 5-phosphate (route II): step 3/3. Catalyzes the phosphorylation of ribose 1,5-bisphosphate to 5-phospho-D-ribosyl alpha-1-diphosphate (PRPP). This chain is Ribose 1,5-bisphosphate phosphokinase PhnN, found in Agrobacterium fabrum (strain C58 / ATCC 33970) (Agrobacterium tumefaciens (strain C58)).